The chain runs to 90 residues: Putative septation protein SpoVG (90 aa).

This sequence belongs to the SpoVG family.

Its function is as follows. Could be involved in septation. The protein is Putative septation protein SpoVG of Clostridium perfringens (strain ATCC 13124 / DSM 756 / JCM 1290 / NCIMB 6125 / NCTC 8237 / Type A).